We begin with the raw amino-acid sequence, 462 residues long: Transcription factor-like protein EUC1 (462 aa).

Disordered stretches follow at residues 11–43 and 66–97; these read GFGGYGSLDDDDSDRDSERRNHDLGQRTITTSP and RPTDAAQPPIVSTSTSASATEPTNRIGPGRIK. A phosphoserine mark is found at S17 and S23. Basic and acidic residues predominate over residues 26 to 35; it reads DSERRNHDLG. The segment at 81–140 is homodimerization region; the sequence is SASATEPTNRIGPGRIKETPETNFNAFLIAQLTRMEEQNANLKEEISLMKKEQELFFLEN. Residues 105–135 are a coiled coil; sequence NAFLIAQLTRMEEQNANLKEEISLMKKEQEL. 2 disordered regions span residues 190 to 214 and 226 to 289; these read QEAARVGNPSTSTQAHQSQSRSTNW and GDPR…RNRR. Positions 197-214 are enriched in polar residues; that stretch reads NPSTSTQAHQSQSRSTNW. Residue K231 forms a Glycyl lysine isopeptide (Lys-Gly) (interchain with G-Cter in SUMO) linkage. 2 positions are modified to phosphoserine: S237 and S249. Over residues 240–251 the composition is skewed to acidic residues; that stretch reads ENGEYDGNESDE. Residues 252 to 282 show a composition bias toward polar residues; the sequence is NATTRNLPLNNPDSVSNADDSNNQLDGTGNE. T254 is modified (phosphothreonine). The GCR1 DNA-binding region stretch occupies residues 296 to 385; that stretch reads YKLNRAIQNV…QAIKVVENIR (90 aa). Positions 441–455 are enriched in polar residues; sequence SLQQPHSIPNSSTGT. The segment at 441-462 is disordered; that stretch reads SLQQPHSIPNSSTGTPEHDQDT.

Homodimer. Interacts with SLX5. In terms of processing, sumoylated at Lys-231 and subsequently ubiquitinated by the SUMO-targeted ubiquitin ligase (STUbL) complex SLX5/SLX8.

Its subcellular location is the chromosome. Transcription factor-like protein that binds to specific DNA motifs called ub-HS-motif associated with several locations where proteins other than histone H2B are ubiquitinated (ub-hotspots). Ubiquitination at these sites depends on the SUMO-targeted ubiquitin ligase (STUbL) complex SLX5/SLX8 and protein turnover on the CDC48 segregase. UBC9, SIZ1, or SIZ2 sumoylate DNA-bound EUC1 to stabilize its DNA-binding. Sumoylated EUC1 acts a cofactor required for the recruitment of the SLX5/SLX8 STUbL complex via specific contacts between EUC1 and SLX5, as well as an additional SUMO-mediated interaction. SLX5/SLX8 then ubiquitinates EUC1 and presumably other targets at ub-hotspots, and the CDC48/UFD1/NPL4 complex, together with UBX4 and UBX5, removes Lys-48-linked ubiquitinated proteins from chromatin. Ubiquitinated proteins could be either degraded by the proteasome or recycled by deubiquitination. EUC1 itself does not seem to underlie extensive turnover, as it is a very stable protein. EUC1 is able to act as a transcription factor, but its function at ub-hotspots does not seem to depend on this ability. EUC1-mediated ub-hotspots are crucial during stress responses when gene expression control is impaired. This is Transcription factor-like protein EUC1 from Saccharomyces cerevisiae (strain ATCC 204508 / S288c) (Baker's yeast).